We begin with the raw amino-acid sequence, 92 residues long: PqqA binding protein (92 aa).

It belongs to the PqqD family. Monomer. Interacts with PqqE.

The protein operates within cofactor biosynthesis; pyrroloquinoline quinone biosynthesis. Functionally, functions as a PqqA binding protein and presents PqqA to PqqE, in the pyrroloquinoline quinone (PQQ) biosynthetic pathway. The polypeptide is PqqA binding protein (Xanthomonas campestris pv. campestris (strain 8004)).